The sequence spans 239 residues: Pimeloyl-[acyl-carrier protein] methyl ester esterase (239 aa).

Substrate contacts are provided by residues W20, 77–78, and 138–142; these read SM and FISLQ. Residue S77 is the Nucleophile of the active site. Catalysis depends on residues D192 and H220. Position 220 (H220) interacts with substrate.

Belongs to the AB hydrolase superfamily. Carboxylesterase BioH family. In terms of assembly, monomer.

Its subcellular location is the cytoplasm. The catalysed reaction is 6-carboxyhexanoyl-[ACP] methyl ester + H2O = 6-carboxyhexanoyl-[ACP] + methanol + H(+). It participates in cofactor biosynthesis; biotin biosynthesis. In terms of biological role, the physiological role of BioH is to remove the methyl group introduced by BioC when the pimeloyl moiety is complete. It allows to synthesize pimeloyl-ACP via the fatty acid synthetic pathway through the hydrolysis of the ester bonds of pimeloyl-ACP esters. This chain is Pimeloyl-[acyl-carrier protein] methyl ester esterase, found in Legionella pneumophila (strain Lens).